A 90-amino-acid polypeptide reads, in one-letter code: Acylphosphatase (90 aa).

In terms of domain architecture, Acylphosphatase-like spans 3–90 (AIEVDVFGLV…FETNDFAIRG (88 aa)). Residues Arg18 and Asn36 contribute to the active site.

Belongs to the acylphosphatase family.

The catalysed reaction is an acyl phosphate + H2O = a carboxylate + phosphate + H(+). The chain is Acylphosphatase (acyP) from Leuconostoc mesenteroides subsp. mesenteroides (strain ATCC 8293 / DSM 20343 / BCRC 11652 / CCM 1803 / JCM 6124 / NCDO 523 / NBRC 100496 / NCIMB 8023 / NCTC 12954 / NRRL B-1118 / 37Y).